Consider the following 470-residue polypeptide: ATP synthase subunit beta (470 aa).

155-162 (GGAGVGKT) contributes to the ATP binding site.

The protein belongs to the ATPase alpha/beta chains family. In terms of assembly, F-type ATPases have 2 components, CF(1) - the catalytic core - and CF(0) - the membrane proton channel. CF(1) has five subunits: alpha(3), beta(3), gamma(1), delta(1), epsilon(1). CF(0) has three main subunits: a(1), b(2) and c(9-12). The alpha and beta chains form an alternating ring which encloses part of the gamma chain. CF(1) is attached to CF(0) by a central stalk formed by the gamma and epsilon chains, while a peripheral stalk is formed by the delta and b chains.

Its subcellular location is the cell membrane. The catalysed reaction is ATP + H2O + 4 H(+)(in) = ADP + phosphate + 5 H(+)(out). Functionally, produces ATP from ADP in the presence of a proton gradient across the membrane. The catalytic sites are hosted primarily by the beta subunits. This Pectinatus frisingensis protein is ATP synthase subunit beta.